The following is a 618-amino-acid chain: Cell pattern formation-associated protein STU1 (618 aa).

Over residues 13 to 28 (MSAGPTQQPPTVTSYN) the composition is skewed to polar residues. Residues 13 to 105 (MSAGPTQQPP…FDTSGQIAPP (93 aa)) form a disordered region. Low complexity predominate over residues 48–59 (YGGYPYTNGMPS). Polar residues predominate over residues 91–101 (NQYSGFDTSGQ). The HTH APSES-type domain maps to 110–216 (RVTATLWEDE…HNISALLYHP (107 aa)). Residues 144–165 (GTKLLNVAGMTRGRRDGILKSE) constitute a DNA-binding region (H-T-H motif). Disordered regions lie at residues 229–355 (AERR…YDGS) and 390–618 (SEMG…SRRR). 4 stretches are compositionally biased toward polar residues: residues 256–266 (MSQNGSQSLSG), 284–298 (TSAS…SDSF), 305–326 (AMSN…TRSM), and 336–355 (GSTL…YDGS). Positions 438-451 (DHEHDPEYTHDSRT) are enriched in basic and acidic residues. Polar residues predominate over residues 452-476 (YDNSQSQYNYTAPPVSSISSEQAHV). A compositionally biased stretch (low complexity) spans 494–512 (PRSAAAPQAYYQQAYSTSP). The span at 513–563 (RSATHQSTSNLYNVMSNDRGSTTNGSANGDVYSQSTDLSNGYATPVTNGNA) shows a compositional bias: polar residues. The nuclear localization domain stretch occupies residues 566–588 (KRGRDDDDDRSSSSGQMDLKRRK).

Belongs to the EFG1/PHD1/stuA family.

The protein resides in the nucleus. Its function is as follows. Transcription factor that regulates asexual reproduction. Binds the StuA-response elements (StRE) with the consensus sequence 5'-(A/T)CGCG(T/A)N(A/C)-3' at the promoters of target genes. Required for appressorium-mediated infection of rice leaves due to its involvement in the mobilization of lipids and glycogen. The sequence is that of Cell pattern formation-associated protein STU1 from Pyricularia oryzae (strain 70-15 / ATCC MYA-4617 / FGSC 8958) (Rice blast fungus).